A 704-amino-acid chain; its full sequence is Fibulin-1 (704 aa).

The first 25 residues, 1-25 (MDKLRGARPLRLLLLLLALLPALRG), serve as a signal peptide directing secretion. Intrachain disulfides connect C33–C59, C34–C66, C47–C67, C76–C107, C89–C108, C110–C134, C111–C141, C124–C142, C181–C191, C187–C200, C202–C215, C221–C234, C228–C243, C249–C261, C267–C280, C274–C289, C295–C307, C313–C326, C320–C335, C342–C355, C361–C374, C368–C383, C385–C398, C404–C416, C412–C425, C427–C440, C446–C455, C451–C464, C466–C480, C486–C499, C495–C508, C510–C524, C530–C543, C537–C552, and C557–C578. 3 Anaphylatoxin-like domains span residues 33 to 74 (CCDK…LEEH), 75 to 109 (YCSD…KCCY), and 110 to 142 (CCLL…RACC). N-linked (GlcNAc...) asparagine glycosylation occurs at N96. Residues 177 to 216 (LHDGCRGGGPCSQQCRDTGSSYVCSCFVGYQLQPDGVNCE) enclose the EGF-like 1 domain. The region spanning 217–262 (DINECITGTHSCGIGQTCVNTLGSFRCQRDTSCGTGYELTDDSRCK) is the EGF-like 2; calcium-binding domain. The 46-residue stretch at 263–308 (DIDECETGTHNCPPDFICQNTPGSFRCRPKLQCMNGFIQDALGNCI) folds into the EGF-like 3; calcium-binding domain. The 48-residue stretch at 309-356 (DINECLSTNMPCPAGQICINTDGSYTCQRISPSCGRGYHLNEDGTRCV) folds into the EGF-like 4; calcium-binding domain. The EGF-like 5; calcium-binding domain maps to 357 to 399 (DVDECSSSDQPCGEGHVCINGPGNYRCECKSGYSFDVISRTCI). The tract at residues 357 to 441 (DVDECSSSDQ…KLSSDGRSCE (85 aa)) is self-association and FN1-binding. The 42-residue stretch at 400 to 441 (DINECRRYPGRLCAHKCENTPGSYYCTCTMGFKLSSDGRSCE) folds into the EGF-like 6; calcium-binding domain. The region spanning 442–481 (DLNECESSPCSQECANVYGSYQCYCRRGFQLSDIDGISCE) is the EGF-like 7; calcium-binding domain. Positions 482–525 (DIDECALPTGGHICSFRCINIPGSFQCTCPSTGYRLAPNARNCQ) constitute an EGF-like 8; calcium-binding domain. The EGF-like 9; calcium-binding domain maps to 526–579 (DIDECVAETHNCSFNETCFNIQGGFRCLSLECPENYRKSGDTVRLEKTDTIRCI). Residues N536 and N540 are each glycosylated (N-linked (GlcNAc...) asparagine).

It belongs to the fibulin family. As to quaternary structure, homomultimerizes and interacts with various extracellular matrix components.

Its subcellular location is the secreted. The protein resides in the extracellular space. The protein localises to the extracellular matrix. Incorporated into fibronectin-containing matrix fibers. May play a role in cell adhesion and migration along protein fibers within the extracellular matrix (ECM). Could be important for certain developmental processes and contribute to the supramolecular organization of ECM architecture, in particular to those of basement membranes. This Gallus gallus (Chicken) protein is Fibulin-1 (FBLN1).